The following is a 527-amino-acid chain: EGF domain-specific O-linked N-acetylglucosamine transferase (527 aa).

The first 19 residues, methionine 1–glutamine 19, serve as a signal peptide directing secretion. Residues aspartate 295 to aspartate 297 carry the Required for optimal activity motif. Asparagine 354 is a glycosylation site (N-linked (GlcNAc...) asparagine). Residues histidine 524 to leucine 527 carry the Prevents secretion from ER motif.

The protein belongs to the glycosyltransferase 61 family.

It is found in the endoplasmic reticulum lumen. It catalyses the reaction L-seryl-[protein] + UDP-N-acetyl-alpha-D-glucosamine = 3-O-(N-acetyl-beta-D-glucosaminyl)-L-seryl-[protein] + UDP + H(+). It carries out the reaction L-threonyl-[protein] + UDP-N-acetyl-alpha-D-glucosamine = 3-O-(N-acetyl-beta-D-glucosaminyl)-L-threonyl-[protein] + UDP + H(+). Functionally, catalyzes the transfer of a single N-acetylglucosamine from UDP-GlcNAc to a serine or threonine residue in extracellular proteins resulting in their modification with a beta-linked N-acetylglucosamine (O-GlcNAc). Specifically glycosylates the Thr residue located between the fifth and sixth conserved cysteines of folded EGF-like domains. This is EGF domain-specific O-linked N-acetylglucosamine transferase (Eogt) from Rattus norvegicus (Rat).